The sequence spans 260 residues: 3'-5' ssDNA/RNA exonuclease TatD (260 aa).

Residues glutamate 92, histidine 128, and histidine 153 each coordinate a divalent metal cation.

The protein belongs to the metallo-dependent hydrolases superfamily. TatD-type hydrolase family. TatD subfamily. Monomer. Requires Mg(2+) as cofactor.

Its subcellular location is the cytoplasm. Its function is as follows. 3'-5' exonuclease that prefers single-stranded DNA and RNA. May play a role in the H(2)O(2)-induced DNA damage repair. In Edwardsiella piscicida, this protein is 3'-5' ssDNA/RNA exonuclease TatD.